The sequence spans 393 residues: Protein Njmu-R1 (393 aa).

The segment at 1 to 74 is disordered; it reads MLPSLQESLD…AETPSGDDFS (74 aa). Phosphoserine occurs at positions 8 and 18. Positions 9 to 24 are enriched in acidic residues; it reads LDGDEKELESSEEGGS.

As to quaternary structure, interacts with TBC1D23; this interaction may be indirect.

Its function is as follows. May have a role in spermatogenesis. The sequence is that of Protein Njmu-R1 from Mus musculus (Mouse).